The following is a 109-amino-acid chain: Cytochrome c oxidase subunit 6A1, mitochondrial (109 aa).

The transit peptide at 1 to 24 directs the protein to the mitochondrion; the sequence is MAAAAGSRVFGLLGRSRLQLSRCM. The Mitochondrial matrix segment spans residues 25–34; the sequence is SSGAHGEEGS. Residues 35–59 traverse the membrane as a helical segment; sequence ARMWKALTYFVALPGVGVSMLNVFL. At 60–109 the chain is on the mitochondrial intermembrane side; the sequence is KSHHGEEERPEFVAYPHLRIRSKPFPWGDGNHTLFHNPHVNPLPTGYEDE.

The protein belongs to the cytochrome c oxidase subunit 6A family. Component of the cytochrome c oxidase (complex IV, CIV), a multisubunit enzyme composed of 14 subunits. The complex is composed of a catalytic core of 3 subunits MT-CO1, MT-CO2 and MT-CO3, encoded in the mitochondrial DNA, and 11 supernumerary subunits COX4I1 (or COX4I2), COX5A, COX5B, COX6A2 (or COX6A1), COX6B1 (or COX6B2), COX6C, COX7A1 (or COX7A2), COX7B, COX7C, COX8B and NDUFA4, which are encoded in the nuclear genome. The complex exists as a monomer or a dimer and forms supercomplexes (SCs) in the inner mitochondrial membrane with NADH-ubiquinone oxidoreductase (complex I, CI) and ubiquinol-cytochrome c oxidoreductase (cytochrome b-c1 complex, complex III, CIII), resulting in different assemblies (supercomplex SCI(1)III(2)IV(1) and megacomplex MCI(2)III(2)IV(2)).

The protein localises to the mitochondrion inner membrane. It functions in the pathway energy metabolism; oxidative phosphorylation. Its function is as follows. Component of the cytochrome c oxidase, the last enzyme in the mitochondrial electron transport chain which drives oxidative phosphorylation. The respiratory chain contains 3 multisubunit complexes succinate dehydrogenase (complex II, CII), ubiquinol-cytochrome c oxidoreductase (cytochrome b-c1 complex, complex III, CIII) and cytochrome c oxidase (complex IV, CIV), that cooperate to transfer electrons derived from NADH and succinate to molecular oxygen, creating an electrochemical gradient over the inner membrane that drives transmembrane transport and the ATP synthase. Cytochrome c oxidase is the component of the respiratory chain that catalyzes the reduction of oxygen to water. Electrons originating from reduced cytochrome c in the intermembrane space (IMS) are transferred via the dinuclear copper A center (CU(A)) of subunit 2 and heme A of subunit 1 to the active site in subunit 1, a binuclear center (BNC) formed by heme A3 and copper B (CU(B)). The BNC reduces molecular oxygen to 2 water molecules unsing 4 electrons from cytochrome c in the IMS and 4 protons from the mitochondrial matrix. In Bos taurus (Bovine), this protein is Cytochrome c oxidase subunit 6A1, mitochondrial (COX6A1).